The following is a 191-amino-acid chain: Molybdenum cofactor guanylyltransferase (191 aa).

GTP-binding positions include 11 to 13 (LCG), Lys23, Asp66, and Asp97. Position 97 (Asp97) interacts with Mg(2+).

Belongs to the MobA family. As to quaternary structure, monomer. Mg(2+) is required as a cofactor.

Its subcellular location is the cytoplasm. The enzyme catalyses Mo-molybdopterin + GTP + H(+) = Mo-molybdopterin guanine dinucleotide + diphosphate. Its function is as follows. Transfers a GMP moiety from GTP to Mo-molybdopterin (Mo-MPT) cofactor (Moco or molybdenum cofactor) to form Mo-molybdopterin guanine dinucleotide (Mo-MGD) cofactor. This is Molybdenum cofactor guanylyltransferase from Campylobacter jejuni subsp. jejuni serotype O:6 (strain 81116 / NCTC 11828).